Reading from the N-terminus, the 260-residue chain is uncharacterized protein (260 aa).

Positions 1–22 (MGYLKRFALYISILVLIVMVAG) are cleaved as a signal peptide. The N-palmitoyl cysteine moiety is linked to residue C23. A lipid anchor (S-diacylglycerol cysteine) is attached at C23.

The protein belongs to the staphylococcal tandem lipoprotein family.

The protein localises to the cell membrane. This is an uncharacterized protein from Staphylococcus aureus (strain bovine RF122 / ET3-1).